The sequence spans 80 residues: Translation initiation factor IF-1 (80 aa).

The S1-like domain occupies 6-80 (EKRKKEESDV…TSRGRIVYRK (75 aa)).

Belongs to the IF-1 family. In terms of assembly, component of the 30S ribosomal translation pre-initiation complex which assembles on the 30S ribosome in the order IF-2 and IF-3, IF-1 and N-formylmethionyl-tRNA(fMet); mRNA recruitment can occur at any time during PIC assembly.

It localises to the cytoplasm. One of the essential components for the initiation of protein synthesis. Stabilizes the binding of IF-2 and IF-3 on the 30S subunit to which N-formylmethionyl-tRNA(fMet) subsequently binds. Helps modulate mRNA selection, yielding the 30S pre-initiation complex (PIC). Upon addition of the 50S ribosomal subunit IF-1, IF-2 and IF-3 are released leaving the mature 70S translation initiation complex. The chain is Translation initiation factor IF-1 from Deinococcus geothermalis (strain DSM 11300 / CIP 105573 / AG-3a).